A 312-amino-acid chain; its full sequence is Peroxidase (312 aa).

An N-terminal signal peptide occupies residues 1-23 (MAMGSASCISLVVLVALATAASG). Pyrrolidone carboxylic acid is present on Gln-24. 4 cysteine pairs are disulfide-bonded: Cys-34–Cys-107, Cys-67–Cys-70, Cys-113–Cys-307, and Cys-192–Cys-218. His-65 (proton acceptor) is an active-site residue. 4 residues coordinate Ca(2+): Asp-66, Gly-69, Asp-71, and Ser-73. Substrate is bound at residue Pro-155. His-185 contacts heme b. Thr-186 contributes to the Ca(2+) binding site. The Ca(2+) site is built by Asp-231, Thr-234, and Asp-239. Asn-262 carries N-linked (GlcNAc...) asparagine glycosylation.

This sequence belongs to the peroxidase family. Classical plant (class III) peroxidase subfamily. Ca(2+) is required as a cofactor. It depends on heme b as a cofactor. In terms of tissue distribution, root.

It localises to the secreted. It catalyses the reaction 2 a phenolic donor + H2O2 = 2 a phenolic radical donor + 2 H2O. Functionally, removal of H(2)O(2), oxidation of toxic reductants, biosynthesis and degradation of lignin, suberization, auxin catabolism, response to environmental stresses such as wounding, pathogen attack and oxidative stress. These functions might be dependent on each isozyme/isoform in each plant tissue. Its function is as follows. Involved in defense response to powdery meldew fungus. In Triticum aestivum (Wheat), this protein is Peroxidase.